A 261-amino-acid chain; its full sequence is Carbonic anhydrase 1 (261 aa).

The disordered stretch occupies residues 1-40; it reads MASPDWGYDDKNGPEQWSKLYPIANGNNQSPVDIKTSETK. Position 2 is an N-acetylalanine (alanine 2). The region spanning 4 to 261 is the Alpha-carbonic anhydrase domain; the sequence is PDWGYDDKNG…LKGRTVRASF (258 aa). The active-site Proton donor/acceptor is the histidine 65. Residues histidine 95, histidine 97, and histidine 120 each coordinate Zn(2+). Substrate contacts are provided by residues threonine 200 and 200–201; that span reads TH. Residues 241–261 are disordered; it reads PMQHNNRPTQPLKGRTVRASF.

The protein belongs to the alpha-carbonic anhydrase family. It depends on Zn(2+) as a cofactor.

Its subcellular location is the cytoplasm. The enzyme catalyses hydrogencarbonate + H(+) = CO2 + H2O. It carries out the reaction urea = cyanamide + H2O. With respect to regulation, inhibited by acetazolamide. Its function is as follows. Catalyzes the reversible hydration of carbon dioxide. Can hydrate cyanamide to urea. This chain is Carbonic anhydrase 1 (CA1), found in Pan troglodytes (Chimpanzee).